Consider the following 270-residue polypeptide: MSKIAKTAIISPKAEINKGVEIGEFCVIGDGVKLDEGVKLHNNVTLQGHTFIGKNTEIFPFAVLGTQPQDLKYKGEYSELIIGEDNLIREFCMINPGTEGGIKKTLIGDKNLLMAYVHVAHDCVIGSHCILANGVTLAGHIEIGDYVNIGGLTAIHQFVRIAKGCMIAGKSALGKDVPPYCTVEGNRAFIRGLNRHRMRQLLESKDIDFIHVLYKRLFRPVPSLRESAKLELEEHANNPFVKEICSFILESSRGVAYKSSEYSSEEKQEE.

This sequence belongs to the transferase hexapeptide repeat family. LpxA subfamily. In terms of assembly, homotrimer.

It localises to the cytoplasm. It catalyses the reaction a (3R)-hydroxyacyl-[ACP] + UDP-N-acetyl-alpha-D-glucosamine = a UDP-3-O-[(3R)-3-hydroxyacyl]-N-acetyl-alpha-D-glucosamine + holo-[ACP]. Its pathway is glycolipid biosynthesis; lipid IV(A) biosynthesis; lipid IV(A) from (3R)-3-hydroxytetradecanoyl-[acyl-carrier-protein] and UDP-N-acetyl-alpha-D-glucosamine: step 1/6. Involved in the biosynthesis of lipid A, a phosphorylated glycolipid that anchors the lipopolysaccharide to the outer membrane of the cell. The protein is Acyl-[acyl-carrier-protein]--UDP-N-acetylglucosamine O-acyltransferase of Helicobacter pylori (strain HPAG1).